A 350-amino-acid chain; its full sequence is Derriere protein (350 aa).

Positions 1-16 (MLSLACFFSFLLMVKS) are cleaved as a signal peptide. Positions 17-236 (SPLTFQERML…SSCKTPRAKR (220 aa)) are excised as a propeptide. N-linked (GlcNAc...) asparagine glycans are attached at residues Asn-171 and Asn-202. Disulfide bonds link Cys-249-Cys-315, Cys-278-Cys-347, and Cys-282-Cys-349.

This sequence belongs to the TGF-beta family. Homodimer; disulfide-linked. Also forms heterodimers with other TGF-beta family members including nodal2/nr-2 and bmp4.

It localises to the secreted. In terms of biological role, required for posterior mesoderm formation during embryogenesis. Acts indirectly to suppress head formation by altering mesodermal patterning. Also involved in the establishment of left-right axis asymmetry, acting upstream of nodal/nr-1. Can exert long-range effects in the embryo. The sequence is that of Derriere protein from Xenopus tropicalis (Western clawed frog).